We begin with the raw amino-acid sequence, 248 residues long: Proteasome subunit alpha (248 aa).

Belongs to the peptidase T1A family. The 20S proteasome core is composed of 14 alpha and 14 beta subunits that assemble into four stacked heptameric rings, resulting in a barrel-shaped structure. The two inner rings, each composed of seven catalytic beta subunits, are sandwiched by two outer rings, each composed of seven alpha subunits. The catalytic chamber with the active sites is on the inside of the barrel. Has a gated structure, the ends of the cylinder being occluded by the N-termini of the alpha-subunits. Is capped by the proteasome-associated ATPase, ARC.

It localises to the cytoplasm. Its pathway is protein degradation; proteasomal Pup-dependent pathway. With respect to regulation, the formation of the proteasomal ATPase ARC-20S proteasome complex, likely via the docking of the C-termini of ARC into the intersubunit pockets in the alpha-rings, may trigger opening of the gate for substrate entry. Interconversion between the open-gate and close-gate conformations leads to a dynamic regulation of the 20S proteasome proteolysis activity. Component of the proteasome core, a large protease complex with broad specificity involved in protein degradation. This Mycobacterium tuberculosis (strain ATCC 25177 / H37Ra) protein is Proteasome subunit alpha.